The chain runs to 362 residues: Adenosine kinase (362 aa).

Ala-2 carries the N-acetylalanine modification. The Nuclear localization signal signature appears at Pro-8–Glu-16. Asp-35 provides a ligand contact to adenosine. Ser-49 provides a ligand contact to Mg(2+). Residue Tyr-77 is modified to Phosphotyrosine. 2 residues coordinate Mg(2+): Asp-147 and Asn-148. Residue Gln-306 coordinates adenosine. Asp-317 (proton acceptor) is an active-site residue.

This sequence belongs to the carbohydrate kinase PfkB family. In terms of assembly, monomer. Mg(2+) serves as cofactor. In terms of tissue distribution, widely expressed. Highest level in placenta, liver, muscle and kidney.

The protein resides in the nucleus. It is found in the cytoplasm. It carries out the reaction adenosine + ATP = AMP + ADP + H(+). It participates in purine metabolism; AMP biosynthesis via salvage pathway; AMP from adenosine: step 1/1. Activity is inhibited by 5-iodotubercidin and 5'-amino-5'-deoxyadenosine. Catalyzes the phosphorylation of the purine nucleoside adenosine at the 5' position in an ATP-dependent manner. Serves as a potential regulator of concentrations of extracellular adenosine and intracellular adenine nucleotides. The sequence is that of Adenosine kinase from Homo sapiens (Human).